A 429-amino-acid polypeptide reads, in one-letter code: Adenylosuccinate synthetase (429 aa).

GTP is bound by residues 12–18 and 40–42; these read GDEGKGK and GHT. The Proton acceptor role is filled by D13. Mg(2+)-binding residues include D13 and G40. IMP is bound by residues 13–16, 38–41, T129, R143, Q224, T239, and R303; these read DEGK and NAGH. The Proton donor role is filled by H41. 299–305 contacts substrate; sequence ATTGRKR. GTP-binding positions include R305, 331 to 333, and 413 to 415; these read KLD and SVG.

This sequence belongs to the adenylosuccinate synthetase family. As to quaternary structure, homodimer. Mg(2+) is required as a cofactor.

It is found in the cytoplasm. It catalyses the reaction IMP + L-aspartate + GTP = N(6)-(1,2-dicarboxyethyl)-AMP + GDP + phosphate + 2 H(+). Its pathway is purine metabolism; AMP biosynthesis via de novo pathway; AMP from IMP: step 1/2. Its function is as follows. Plays an important role in the de novo pathway of purine nucleotide biosynthesis. Catalyzes the first committed step in the biosynthesis of AMP from IMP. This chain is Adenylosuccinate synthetase, found in Desulfosudis oleivorans (strain DSM 6200 / JCM 39069 / Hxd3) (Desulfococcus oleovorans).